Reading from the N-terminus, the 874-residue chain is Leucine--tRNA ligase (874 aa).

The 'HIGH' region signature appears at 47-57 (PYPSGKLHMGH). The 'KMSKS' region motif lies at 636–640 (KMSKS). Position 639 (Lys-639) interacts with ATP.

The protein belongs to the class-I aminoacyl-tRNA synthetase family.

It is found in the cytoplasm. The enzyme catalyses tRNA(Leu) + L-leucine + ATP = L-leucyl-tRNA(Leu) + AMP + diphosphate. The protein is Leucine--tRNA ligase of Acinetobacter baumannii (strain AB0057).